Consider the following 1708-residue polypeptide: Rapamycin-insensitive companion of mTOR (1708 aa).

Residues 1 to 789 (MAAIGRGRSL…DKANLHALIQ (789 aa)) are interaction with NBN. Residues Ser-21, Ser-35, and Ser-265 each carry the phosphoserine modification. Residue Lys-274 forms a Glycyl lysine isopeptide (Lys-Gly) (interchain with G-Cter in ubiquitin) linkage. Residues 521–570 (LKDTEEALLINLRDSQVLQHKENLEWNWNLIGTILKWPNVNLRNYKDEQL) are ribosome-binding domain. Positions 543, 572, and 576 each coordinate ATP. The interval 1022 to 1041 (LSLNSESTSSRHNSESESVP) is disordered. Residues Lys-1092 and Lys-1095 each carry the N6-acetyllysine modification. Thr-1103 is modified (phosphothreonine). Residues 1103–1134 (TLPNKKHRSSSDPKGGKLSSESKTSNRRIRTL) are disordered. Residues Lys-1116, Lys-1119, and Lys-1125 each carry the N6-acetyllysine modification. Position 1135 is a phosphothreonine; by RPS6KB1 (Thr-1135). Ser-1138, Ser-1162, and Ser-1219 each carry phosphoserine. The disordered stretch occupies residues 1204–1252 (VVESSTSSHMKIRSQSFNTDTTTSGISSMSSSPSRETVGVDATTMDTDC). Positions 1206–1221 (ESSTSSHMKIRSQSFN) are enriched in polar residues. Residues 1222-1240 (TDTTTSGISSMSSSPSRET) are compositionally biased toward low complexity. Ser-1235 is modified (phosphoserine; by GSK3-beta). Thr-1271 bears the Phosphothreonine mark. Ser-1274, Ser-1278, Ser-1282, and Ser-1284 each carry phosphoserine. Positions 1275 to 1288 (NHLSLSKSNSVSLV) are enriched in low complexity. The segment at 1275–1298 (NHLSLSKSNSVSLVPPGSSHTLPR) is disordered. At Thr-1295 the chain carries Phosphothreonine. Ser-1302 and Ser-1313 each carry phosphoserine. Thr-1332 is subject to Phosphothreonine. A phosphoserine mark is found at Ser-1346 and Ser-1353. Thr-1376 carries the post-translational modification Phosphothreonine. At Ser-1385 the chain carries Phosphoserine. Tyr-1386 is modified (phosphotyrosine). Residues Ser-1388, Ser-1396, and Ser-1411 each carry the phosphoserine modification. His-1515, Cys-1520, and Cys-1523 together coordinate Zn(2+). Phosphoserine occurs at positions 1571, 1574, 1577, and 1591. Cys-1651 is a binding site for Zn(2+). Thr-1695 carries the post-translational modification Phosphothreonine; by GSK3-alpha and GSK3-beta.

Belongs to the RICTOR family. Component of the mechanistic target of rapamycin complex 2 (mTORC2), consisting in two heterotretramers composed of MTOR, MLST8, RICTOR and MAPKAP1/SIN1. The mTORC2 core complex associates with PRR5/PROTOR1 and/or PRR5L/PROTOR2. Contrary to mTORC1, mTORC2 does not bind to and is not sensitive to FKBP12-rapamycin. Binds directly to MTOR and PRR5 within the TORC2 complex; interaction with MTOR is enhanced by deubiquitination of RICTOR by USP9X. Interaction with MAPKAP1 is not enhanced by RICTOR deubiquitination by USP9X. Interacts with CCDC28B. Interacts with NBN. Interacts with SIK3. Interacts with NCKAP1L. Interacts with kinases GSK3A and GSK3B; the interactions lead to phosphorylation of RICTOR at Thr-1695 which facilitates its FBXW7-mediated ubiquitination and subsequent degradation. Interacts with FBXW7; the interaction is enhanced by GSK3-mediated phosphorylation of Thr-1695 and results in RICTOR ubiquitination and degradation. Interacts with ARMH4 (via cytoplasmic tail); this interaction bridges ARMH4 to the mTORC2 complex and inhibits the mTORC2 kinase activity. Interacts with UBXN2A. Interacts with TSPAN8. As to quaternary structure, (Microbial infection) Interacts with vaccinia virus protein F17; this interaction dysregulates MTOR. In terms of processing, phosphorylated by MTOR; when part of mTORC2. Phosphorylated at Thr-1135 by RPS6KB1 downstream of the mTORC1 complex: phosphorylation of RICTOR inhibits mTORC2 signaling by creating a binding site for 14-3-3 proteins. Phosphorylated at Thr-1695 by GSK3A and GSK3B which facilitates RICTOR ubiquitination and subsequent degradation. Phosphorylated at Ser-1235 by GSK3B in response to endoplasmic stress, inhibiting mTORC2 signaling. Ubiquitinated by the SCF(FBXW7) complex, leading to its degradation by the proteasome. Deubiquitinated by USP9X; deubiquitination stabilizes RICTOR and enhances its binding to MTOR, thus promoting mTORC2 complex assembly. Post-translationally, acetylated by EP300/p300 in response to glucose, leading to activate the mTORC2 complex. Acetylation by BLOC1S1/GCN5L1 in response to hypotoxic stress protects RICTOR against ubiquitination and subsequent degradation by the proteasome.

It localises to the cell membrane. The protein resides in the endoplasmic reticulum membrane. It is found in the lysosome membrane. Component of the mechanistic target of rapamycin complex 2 (mTORC2), which transduces signals from growth factors to pathways involved in proliferation, cytoskeletal organization, lipogenesis and anabolic output. In response to growth factors, mTORC2 phosphorylates and activates AGC protein kinase family members, including AKT (AKT1, AKT2 and AKT3), PKC (PRKCA, PRKCB and PRKCE) and SGK1. In contrast to mTORC1, mTORC2 is nutrient-insensitive. Within the mTORC2 complex, RICTOR probably acts as a molecular adapter. RICTOR is responsible for the FKBP12-rapamycin-insensitivity of mTORC2. mTORC2 plays a critical role in AKT1 activation by mediating phosphorylation of different sites depending on the context, such as 'Thr-450', 'Ser-473', 'Ser-477' or 'Thr-479', facilitating the phosphorylation of the activation loop of AKT1 on 'Thr-308' by PDPK1/PDK1 which is a prerequisite for full activation. mTORC2 catalyzes the phosphorylation of SGK1 at 'Ser-422' and of PRKCA on 'Ser-657'. The mTORC2 complex also phosphorylates various proteins involved in insulin signaling, such as FBXW8 and IGF2BP1. mTORC2 acts upstream of Rho GTPases to regulate the actin cytoskeleton, probably by activating one or more Rho-type guanine nucleotide exchange factors. mTORC2 promotes the serum-induced formation of stress-fibers or F-actin. The sequence is that of Rapamycin-insensitive companion of mTOR from Homo sapiens (Human).